Reading from the N-terminus, the 396-residue chain is Squamosa promoter-binding-like protein 10 (396 aa).

Residues 74–104 (QSTSINSSSPEDKRCNLASQSSPGDSSSNID) form a disordered region. Over residues 90-104 (LASQSSPGDSSSNID) the composition is skewed to polar residues. The SBP-type zinc finger occupies 173 to 250 (VPRCQIDGCE…SHHNARRRKP (78 aa)). The Zn(2+) site is built by Cys-176, Cys-181, Cys-198, His-201, Cys-217, Cys-220, His-224, and Cys-236. A Bipartite nuclear localization signal motif is present at residues 233–249 (KRSCRKRLSHHNARRRK).

Requires Zn(2+) as cofactor.

The protein localises to the nucleus. Trans-acting factor that binds specifically to the consensus nucleotide sequence 5'-TNCGTACAA-3'. The protein is Squamosa promoter-binding-like protein 10 (SPL10) of Arabidopsis thaliana (Mouse-ear cress).